The chain runs to 406 residues: MKATCWILAGFCLLFCCKAEEGLNFPTYDGKDRVIDLNEKNYKHALKKYDMLCLLFHEPVSSDRVSQKQFQMTEMVLELAAQVLEPRSIGFGMVDSKKDAKLAKKLGLVEEGSLYVFKEERLIEFDGELATDVLVEFLLDLLEDPVEVINSKLELQAFDQIDDEIKLIGYFKGEDSEHYKAFEEAAEHFQPYVKFFATFDKGVAKKLGLKMNEVDFYEPFMDEPVHIPDKPYTEEELVEFVKEHKRATLRKLRPEDMFETWEDDMEGIHIVAFAEEDDPDGFEFLEILKQVARDNTDNPDLSIVWIDPDDFPLLITYWEKTFKIDLFRPQIGIVNVTDADSVWMEIRDDDDLPTAEELEDWIEDVLSGKINTEDDDDDDDDDDDDDDDDDDDDDDDDDDDDDDDDD.

Positions 1–19 (MKATCWILAGFCLLFCCKA) are cleaved as a signal peptide. N335 is a glycosylation site (N-linked (GlcNAc...) asparagine). The segment at 365-406 (VLSGKINTEDDDDDDDDDDDDDDDDDDDDDDDDDDDDDDDDD) is disordered. Over residues 373–406 (EDDDDDDDDDDDDDDDDDDDDDDDDDDDDDDDDD) the composition is skewed to acidic residues.

This sequence belongs to the calsequestrin family. As to expression, skeletal and heart muscle.

It localises to the sarcoplasmic reticulum lumen. In terms of biological role, calsequestrin is a high-capacity, moderate affinity, calcium-binding protein and thus acts as an internal calcium store in muscle. Calcium ions are bound by clusters of acidic residues at the protein surface, especially at the interface between subunits. Can bind around 60 Ca(2+) ions. Regulates the release of lumenal Ca(2+) via the calcium release channel RYR2; this plays an important role in triggering muscle contraction. Plays a role in excitation-contraction coupling in the heart and in regulating the rate of heart beats. The polypeptide is Calsequestrin-2 (CASQ2) (Gallus gallus (Chicken)).